A 320-amino-acid chain; its full sequence is Mitochondrial thiamine pyrophosphate carrier (320 aa).

Solcar repeat units follow at residues Asn13 to Leu106, Arg116 to Leu202, and Asn214 to Val309. Residues Ala19–Ile39 traverse the membrane as a helical segment. A Phosphoserine modification is found at Ser51. Helical transmembrane passes span Ile87–Val107, Phe122–Leu142, Val173–Phe193, and Leu220–Phe240. Positions Lys241 to Val246 match the Substrate recognition motif. Residues Ala293 to Met313 traverse the membrane as a helical segment.

The protein belongs to the mitochondrial carrier (TC 2.A.29) family. As to expression, expressed in all tissues examined except for placenta. Highest levels in colon, kidney, lung, testis, spleen, and brain.

The protein localises to the mitochondrion membrane. The catalysed reaction is thiamine phosphate(out) + thiamine diphosphate(in) = thiamine phosphate(in) + thiamine diphosphate(out). In terms of biological role, mitochondrial transporter mediating uptake of thiamine diphosphate into mitochondria. It is not clear if the antiporter activity is affected by the membrane potential or by the proton electrochemical gradient. This Homo sapiens (Human) protein is Mitochondrial thiamine pyrophosphate carrier.